The primary structure comprises 1045 residues: Fibrosin-1-like protein (1045 aa).

Over residues 1–12 (MEAKVRPSRRSR) the composition is skewed to basic residues. Disordered regions lie at residues 1–86 (MEAK…DGFA) and 99–315 (DMAL…THVP). Positions 13 to 28 (AQRDRGRRREAARDAR) are enriched in basic and acidic residues. Residues 48–63 (GLRGAPPRGAAPAPRT) show a composition bias toward low complexity. A compositionally biased stretch (basic and acidic residues) spans 99 to 123 (DMALKPHERKEKWERRLIKKPRESE). Polar residues predominate over residues 183 to 197 (EATSSRDPLSDSSAH). Over residues 270–280 (HAAPCPGPPPG) the composition is skewed to pro residues. A Phosphoserine modification is found at S340. Over residues 443–457 (QHTHQHTHQHTHQHQ) the composition is skewed to basic residues. Disordered regions lie at residues 443–462 (QHTHQHTHQHTHQHQHTFAP) and 719–753 (EGSSVHGLPSPHEAWNRLHRAPPSFPAPPPWPKSV). Positions 741–750 (PSFPAPPPWP) are enriched in pro residues. S790 bears the Phosphoserine mark. Disordered regions lie at residues 809 to 880 (ELGR…APLQ) and 910 to 961 (AAAP…PALD). The segment covering 817 to 837 (AEREAEPRVKESRSPAKEEAA) has biased composition (basic and acidic residues). K858 is covalently cross-linked (Glycyl lysine isopeptide (Lys-Gly) (interchain with G-Cter in SUMO2)). A compositionally biased stretch (low complexity) spans 910–922 (AAAPAPGSAALLE). Residues 923–949 (PPERPYRDREPHGYSPERLRGELERAR) are compositionally biased toward basic and acidic residues. S937 and S977 each carry phosphoserine. Phosphothreonine occurs at positions 989 and 1010. The disordered stretch occupies residues 991–1045 (PAAAALGAPPPLVTAAGPPTPPGPPRSRTTPLGGLGPGEARDYSPSRNPPEVEAR). Over residues 998-1015 (APPPLVTAAGPPTPPGPP) the composition is skewed to pro residues. Positions 1029–1045 (EARDYSPSRNPPEVEAR) are enriched in basic and acidic residues.

It belongs to the AUTS2 family.

In Homo sapiens (Human), this protein is Fibrosin-1-like protein (FBRSL1).